The chain runs to 276 residues: Undecaprenyl-diphosphatase (276 aa).

The next 8 helical transmembrane spans lie at Met-1 to Val-21, Leu-41 to Ala-61, Ala-97 to Ile-117, Leu-121 to Ala-141, Val-155 to Ile-175, Phe-200 to Ala-220, Leu-231 to Val-251, and Leu-256 to Val-276.

The protein belongs to the UppP family.

It is found in the cell inner membrane. It catalyses the reaction di-trans,octa-cis-undecaprenyl diphosphate + H2O = di-trans,octa-cis-undecaprenyl phosphate + phosphate + H(+). Catalyzes the dephosphorylation of undecaprenyl diphosphate (UPP). Confers resistance to bacitracin. This chain is Undecaprenyl-diphosphatase, found in Desulfatibacillum aliphaticivorans.